The following is a 389-amino-acid chain: Xylose isomerase (389 aa).

Active-site residues include His-101 and Asp-104. Glu-232, Glu-268, His-271, Asp-296, Asp-307, and Asp-309 together coordinate Mg(2+).

It belongs to the xylose isomerase family. In terms of assembly, homotetramer. Requires Mg(2+) as cofactor.

The protein resides in the cytoplasm. The enzyme catalyses alpha-D-xylose = alpha-D-xylulofuranose. The protein is Xylose isomerase of Lactococcus lactis subsp. cremoris (strain SK11).